A 436-amino-acid chain; its full sequence is Acrosin (436 aa).

The signal sequence occupies residues 1 to 19 (MVEMLPTVAVLVLAVSVVA). Asparagine 22 carries N-linked (GlcNAc...) asparagine glycosylation. Cystine bridges form between cysteine 25-cysteine 155, cysteine 29-cysteine 163, cysteine 74-cysteine 90, cysteine 178-cysteine 247, cysteine 210-cysteine 226, and cysteine 237-cysteine 267. The 249-residue stretch at 43-291 (IVSGQSAQLG…YLDWIASKIG (249 aa)) folds into the Peptidase S1 domain. Catalysis depends on charge relay system residues histidine 89 and aspartate 143. N-linked (GlcNAc...) asparagine glycosylation occurs at asparagine 211. The active-site Charge relay system is serine 241. The propeptide at 346-436 (PSSTQTSSSL…NKPSEPFLHS (91 aa)) is pro-rich.

The protein belongs to the peptidase S1 family. In terms of assembly, heavy chain (catalytic) and a light chain linked by two disulfide bonds. Forms a heterodimer with SERPINA5.

It catalyses the reaction Preferential cleavage: Arg-|-Xaa, Lys-|-Xaa.. Its activity is regulated as follows. Inhibited by SERPINA5. In terms of biological role, acrosin is the major protease of mammalian spermatozoa. It is a serine protease of trypsin-like cleavage specificity, it is synthesized in a zymogen form, proacrosin and stored in the acrosome. The sequence is that of Acrosin (Acr) from Mus musculus (Mouse).